Consider the following 132-residue polypeptide: Intraflagellar transport protein 20 homolog (132 aa).

Residues 74 to 123 (GARNLLKSVEKQREAQHQQLQALIAEKKMQLERYRIEYEALQKVEAEQSE) are a coiled coil.

It is found in the golgi apparatus. The protein resides in the cis-Golgi network. It localises to the cytoplasm. Its subcellular location is the cytoskeleton. The protein localises to the microtubule organizing center. It is found in the centrosome. The protein resides in the centriole. It localises to the cell projection. Its subcellular location is the cilium. The protein localises to the cytoplasmic vesicle. It is found in the secretory vesicle. The protein resides in the acrosome. In terms of biological role, involved in ciliary process assembly. May play a role in the trafficking of ciliary membrane proteins from the Golgi complex to the cilium. Regulates the platelet-derived growth factor receptor-alpha (PDGFRA) signaling pathway. Plays an important role in spermatogenesis, particularly spermiogenesis, when germ cells form flagella. This chain is Intraflagellar transport protein 20 homolog (ift20), found in Danio rerio (Zebrafish).